A 431-amino-acid polypeptide reads, in one-letter code: Probable indole-3-pyruvate monooxygenase YUCCA7 (431 aa).

36 to 41 is a binding site for FAD; it reads GAGPSG. 207–212 provides a ligand contact to NADP(+); it reads GCGNSG.

The protein belongs to the FMO family. It depends on FAD as a cofactor. As to expression, expressed in shoot apex regions and siliques, and at high levels in roots. Detected in flowers, stems and leaves.

It catalyses the reaction indole-3-pyruvate + NADPH + O2 + H(+) = (indol-3-yl)acetate + CO2 + NADP(+) + H2O. It functions in the pathway plant hormone metabolism; auxin biosynthesis. Its function is as follows. Involved in auxin biosynthesis. Belongs to the set of redundant YUCCA genes probably responsible for auxin biosynthesis in roots. In Arabidopsis thaliana (Mouse-ear cress), this protein is Probable indole-3-pyruvate monooxygenase YUCCA7 (YUC7).